A 203-amino-acid polypeptide reads, in one-letter code: Endo-type membrane-bound lytic murein transglycosylase A (203 aa).

The N-terminal stretch at 1 to 15 is a signal peptide; the sequence is MKLRWLLILVVFLAG. Cys-16 is lipidated: N-palmitoyl cysteine. A lipid anchor (S-diacylglycerol cysteine) is attached at Cys-16.

Belongs to the transglycosylase Slt family.

It localises to the cell outer membrane. It catalyses the reaction Endolytic cleavage of the (1-&gt;4)-beta-glycosidic linkage between N-acetylmuramic acid (MurNAc) and N-acetylglucosamine (GlcNAc) residues in peptidoglycan with concomitant formation of a 1,6-anhydrobond in the MurNAc residue.. In terms of biological role, murein-degrading enzyme. May play a role in recycling of muropeptides during cell elongation and/or cell division. Preferentially cleaves at a distance of more than two disaccharide units from the ends of the glycan chain. The polypeptide is Endo-type membrane-bound lytic murein transglycosylase A (Klebsiella pneumoniae (strain 342)).